The following is a 169-amino-acid chain: Ribosome maturation factor RimP (169 aa).

The protein belongs to the RimP family.

The protein localises to the cytoplasm. Required for maturation of 30S ribosomal subunits. This Koribacter versatilis (strain Ellin345) protein is Ribosome maturation factor RimP.